Reading from the N-terminus, the 915-residue chain is Protein SLFN14 (915 aa).

Residues 157 to 167 are compositionally biased toward basic residues; it reads AAQRGRRRLHP. The segment at 157–176 is disordered; the sequence is AAQRGRRRLHPPRASNSNLQ. A required for endoribonuclease activity region spans residues 204-389; that stretch reads ESTHVEFKRF…KVLEFKGALQ (186 aa). The interval 390 to 569 is required for ribosome binding; that stretch reads RHLFPVTQKT…QLGCEFFNLL (180 aa).

As to quaternary structure, associates with ribosomes in an ATP-independent manner. The cofactor is Mg(2+). Mn(2+) is required as a cofactor. As to expression, detected in reticulocytes (at protein level).

The protein localises to the nucleus. In terms of biological role, shows no ribosome-associated and endoribonuclease activities. Displays polysome-associated endoribonuclease activity towards mRNAs and rRNAs. May play a role in RNA surveillance pathways by recognizing stalled ribosomes and triggering endonucleolytic cleavage of aberrant mRNAs. Cleaves RNAs in a magnesium-, manganese-dependent and ATP-independent manner. Involved in correct maturation of megakaryocytes and especially important for proplatelet extension. This is Protein SLFN14 from Oryctolagus cuniculus (Rabbit).